Consider the following 181-residue polypeptide: Oligoribonuclease (181 aa).

The 164-residue stretch at 8 to 171 (LIWIDLEMTG…DDIRESVAEL (164 aa)) folds into the Exonuclease domain. Residue Tyr-129 is part of the active site.

This sequence belongs to the oligoribonuclease family.

The protein resides in the cytoplasm. In terms of biological role, 3'-to-5' exoribonuclease specific for small oligoribonucleotides. The protein is Oligoribonuclease of Salmonella choleraesuis (strain SC-B67).